The chain runs to 352 residues: MRYHLSALVLVFTAFRETLTAPTPGNNTIPLPNRLLHQWPNGTWVENISVRPNGNLLVTTSTPDGSVWQVKEPWKENPEVERVFNFDEWVDRLIGIGETQDDKYVVVGSRFYSTDAQSSHVARTFCAMELDFSGNTTEPSARLIAWMPESYLLQGVAALPWDRDTVLISDQYVLRPRAVQIDWTPSPGQIWVLDTRTGEYGLVMTDYAELNTTYAKGPDVGIDGIKIRDHDLFWVNQDDSGIYRVKIDDAGVPVAPVKPQLVASYNTMWDDMAFDPFNENVIWATGLNAVFAATLDGQIVPVDGVGTSDNLTLPGPTACAFGRTEKDKSILYVTGNLLTVPESLLDVKLGGW.

Residues 1 to 20 (MRYHLSALVLVFTAFRETLT) form the signal peptide. N-linked (GlcNAc...) asparagine glycosylation is found at Asn26, Asn41, Asn47, Asn135, Asn211, and Asn310.

It belongs to the eupF Diels-Alderase family.

It functions in the pathway secondary metabolite biosynthesis; terpenoid biosynthesis. Functionally, putative hetero-Diels-Alderase; part of the gene cluster that mediates the biosynthesis of eupenifeldin, a bistropolone meroterpenoid that acts as an antitumor agent. The first step of eupenifeldin biosynthesis is the biosynthesis of 3-methylorcinaldehyde performed by the non-reducing polyketide synthase eupA. Oxidative dearomatization of 3-methylorcinaldehyde likely catalyzed by the FAD-dependent monooxygenase eupB is followed by oxidative ring expansion by the 2-oxoglutarate-dependent dioxygenase eupC to provide the first tropolone metabolite, tropolone stipitaldehyde. In parallel, generation of sesquiterpene alpha-humulene from farnesylpyrophosphate (FPP) is catalyzed by the terpene cyclase eupE. The cytochrome P450 monooxygenase eupD then hydroxylates humulene to humulenol. The putative Diels-Alderase eupF probably catalyzes the formation of the tropolone-humulene skeleton by linking humulenol and the polyketide moiety. The short-chain dehydrogenase/reductase eupG and the flavin-dependent monooxygenase eupH are also essential for eupenifeldin biosynthesis and are likely the additional decorating enzymes of the tropolone-humulene skeleton to produce final eupenifeldin or derivatives. The polypeptide is Putative hetero-Diels-Alderase (Phoma sp).